A 170-amino-acid chain; its full sequence is Orotate phosphoribosyltransferase (170 aa).

5-phospho-alpha-D-ribose 1-diphosphate contacts are provided by residues R86, K87, K90, H92, and 111-119; that span reads EDVTTSGGS. Residues T115 and R143 each coordinate orotate.

This sequence belongs to the purine/pyrimidine phosphoribosyltransferase family. PyrE subfamily. Homodimer. Mg(2+) serves as cofactor.

It catalyses the reaction orotidine 5'-phosphate + diphosphate = orotate + 5-phospho-alpha-D-ribose 1-diphosphate. It functions in the pathway pyrimidine metabolism; UMP biosynthesis via de novo pathway; UMP from orotate: step 1/2. In terms of biological role, catalyzes the transfer of a ribosyl phosphate group from 5-phosphoribose 1-diphosphate to orotate, leading to the formation of orotidine monophosphate (OMP). The polypeptide is Orotate phosphoribosyltransferase (Methanoculleus marisnigri (strain ATCC 35101 / DSM 1498 / JR1)).